The chain runs to 129 residues: Small ribosomal subunit protein uS11 (129 aa).

Belongs to the universal ribosomal protein uS11 family. Part of the 30S ribosomal subunit. Interacts with proteins S7 and S18. Binds to IF-3.

Located on the platform of the 30S subunit, it bridges several disparate RNA helices of the 16S rRNA. Forms part of the Shine-Dalgarno cleft in the 70S ribosome. The polypeptide is Small ribosomal subunit protein uS11 (Thermosipho africanus (strain TCF52B)).